The primary structure comprises 459 residues: uncharacterized protein (459 aa).

12 helical membrane-spanning segments follow: residues 25 to 45 (SYGFGDFGNGFMFDLGQIYLL), 52 to 72 (AGIPAAMAGGIFLVSKLFAAI), 95 to 115 (PYLLIGSIVLAVLTVLIFLSP), 123 to 143 (LIYAYASYMIWGIGYSFVNIP), 167 to 187 (IGSLGALFITSVAVMPLLVKF), 192 to 212 (VGYPVVMGLFAALGVFWFYIC), 249 to 269 (VLMTIFSISAYNIKSAMLVYF), 279 to 299 (LMAYMNFIIIGSSFLGVVFLP), 310 to 330 (TAMIGFGISVAADLINFMLPS), 332 to 352 (VYVFTILASIAFIGISIPNGI), 389 to 409 (SLSGFLSGIGLGIIGYVPNAV), and 420 to 440 (ALLLLYPAIALALAMFIIGFL).

The protein belongs to the sodium:galactoside symporter (TC 2.A.2) family.

It is found in the cell membrane. This is an uncharacterized protein from Bacillus subtilis (strain 168).